Reading from the N-terminus, the 181-residue chain is CDP-archaeol synthase (181 aa).

The next 5 helical transmembrane spans lie at 7 to 27 (VVWALWAMLPAYIPNNAAVLA), 55 to 75 (LIGTAAGTALALGLTQVTPSV), 88 to 108 (LRAGLGLAFGAMLGDIGASFL), 126 to 146 (LDFVVGALLCAFVAAPSWFTE), and 147 to 167 (TFTLPVLVVVVVATPVLHVVT).

This sequence belongs to the CDP-archaeol synthase family. It depends on Mg(2+) as a cofactor.

It localises to the cell membrane. The catalysed reaction is 2,3-bis-O-(geranylgeranyl)-sn-glycerol 1-phosphate + CTP + H(+) = CDP-2,3-bis-O-(geranylgeranyl)-sn-glycerol + diphosphate. It functions in the pathway membrane lipid metabolism; glycerophospholipid metabolism. Catalyzes the formation of CDP-2,3-bis-(O-geranylgeranyl)-sn-glycerol (CDP-archaeol) from 2,3-bis-(O-geranylgeranyl)-sn-glycerol 1-phosphate (DGGGP) and CTP. This reaction is the third ether-bond-formation step in the biosynthesis of archaeal membrane lipids. This chain is CDP-archaeol synthase, found in Haloarcula marismortui (strain ATCC 43049 / DSM 3752 / JCM 8966 / VKM B-1809) (Halobacterium marismortui).